We begin with the raw amino-acid sequence, 217 residues long: Oxygen-evolving enhancer protein 3-1, chloroplastic (217 aa).

The transit peptide at Met1–Ala68 directs the protein to the chloroplast.

The protein belongs to the PsbQ family.

The protein localises to the plastid. Its subcellular location is the chloroplast thylakoid membrane. In Zea mays (Maize), this protein is Oxygen-evolving enhancer protein 3-1, chloroplastic (PSBQ1).